The chain runs to 322 residues: Protein-L-isoaspartate O-methyltransferase (322 aa).

The tract at residues 1-101 (MSGERAKRFP…AKQGDRSAAP (101 aa)) is disordered. Residues 14–29 (EDLKREPRKPEGRVAE) are compositionally biased toward basic and acidic residues. Composition is skewed to low complexity over residues 33–51 (AGDA…PAAA) and 76–91 (HAPA…PQGG). Residue S170 is part of the active site.

It belongs to the methyltransferase superfamily. L-isoaspartyl/D-aspartyl protein methyltransferase family.

It is found in the cytoplasm. The enzyme catalyses [protein]-L-isoaspartate + S-adenosyl-L-methionine = [protein]-L-isoaspartate alpha-methyl ester + S-adenosyl-L-homocysteine. In terms of biological role, catalyzes the methyl esterification of L-isoaspartyl residues in peptides and proteins that result from spontaneous decomposition of normal L-aspartyl and L-asparaginyl residues. It plays a role in the repair and/or degradation of damaged proteins. In Burkholderia pseudomallei (strain 1106a), this protein is Protein-L-isoaspartate O-methyltransferase.